The primary structure comprises 279 residues: Large ribosomal subunit protein uL2 (279 aa).

The segment at 223-279 (VVMNPVDHPHGGGEGRTSGGRHPVSPWGQPTKGYKTRRSARPSDKFIVQKRKRNRNR) is disordered. Residues 270–279 (VQKRKRNRNR) are compositionally biased toward basic residues.

Belongs to the universal ribosomal protein uL2 family. As to quaternary structure, part of the 50S ribosomal subunit. Forms a bridge to the 30S subunit in the 70S ribosome.

Functionally, one of the primary rRNA binding proteins. Required for association of the 30S and 50S subunits to form the 70S ribosome, for tRNA binding and peptide bond formation. It has been suggested to have peptidyltransferase activity; this is somewhat controversial. Makes several contacts with the 16S rRNA in the 70S ribosome. The protein is Large ribosomal subunit protein uL2 of Leptospira borgpetersenii serovar Hardjo-bovis (strain JB197).